The following is a 282-amino-acid chain: Bis(5'-nucleosyl)-tetraphosphatase, symmetrical (282 aa).

This sequence belongs to the Ap4A hydrolase family.

It carries out the reaction P(1),P(4)-bis(5'-adenosyl) tetraphosphate + H2O = 2 ADP + 2 H(+). Hydrolyzes diadenosine 5',5'''-P1,P4-tetraphosphate to yield ADP. The protein is Bis(5'-nucleosyl)-tetraphosphatase, symmetrical of Citrobacter koseri (strain ATCC BAA-895 / CDC 4225-83 / SGSC4696).